Reading from the N-terminus, the 188-residue chain is Accessory gene regulator protein B (188 aa).

A run of 4 helical transmembrane segments spans residues 49-69 (VALI…YFLV), 100-122 (VYFQ…LIIY), 143-163 (LLSI…PEPF), and 164-184 (KQLI…IFFP).

This sequence belongs to the AgrB family.

The protein localises to the cell membrane. Essential for the production of a quorum sensing system signal molecule, the autoinducing peptide (AIP). This quorum sensing system is responsible for the regulation of the expression of virulence factor genes. Involved in the proteolytic processing of AgrD, the precursor of AIP. In Staphylococcus haemolyticus (strain JCSC1435), this protein is Accessory gene regulator protein B.